The following is a 144-amino-acid chain: D-aminoacyl-tRNA deacylase (144 aa).

The Gly-cisPro motif, important for rejection of L-amino acids motif lies at 136–137 (GP).

This sequence belongs to the DTD family. As to quaternary structure, homodimer.

The protein resides in the cytoplasm. The enzyme catalyses glycyl-tRNA(Ala) + H2O = tRNA(Ala) + glycine + H(+). It carries out the reaction a D-aminoacyl-tRNA + H2O = a tRNA + a D-alpha-amino acid + H(+). An aminoacyl-tRNA editing enzyme that deacylates mischarged D-aminoacyl-tRNAs. Also deacylates mischarged glycyl-tRNA(Ala), protecting cells against glycine mischarging by AlaRS. Acts via tRNA-based rather than protein-based catalysis; rejects L-amino acids rather than detecting D-amino acids in the active site. By recycling D-aminoacyl-tRNA to D-amino acids and free tRNA molecules, this enzyme counteracts the toxicity associated with the formation of D-aminoacyl-tRNA entities in vivo and helps enforce protein L-homochirality. This Haemophilus ducreyi (strain 35000HP / ATCC 700724) protein is D-aminoacyl-tRNA deacylase.